We begin with the raw amino-acid sequence, 170 residues long: Protein FAM209 (170 aa).

The signal sequence occupies residues 1 to 20 (MRTLLRWCLFLSLCVSCACA). A helical transmembrane segment spans residues 56 to 76 (WLGNKWLWLFVAIMIYVMLKF). Residues 83–107 (KEQHPPGLRGCQLRSPPKKAQNISP) form a disordered region.

In terms of assembly, interacts with DPY19L2. Interacts with CYLC1; the interaction may be relevant for proper acrosome attachment to the nuclear envelope. In terms of tissue distribution, predominately expressed in testis.

The protein localises to the nucleus inner membrane. Required for sperm acrosome biogenesis. The sequence is that of Protein FAM209 from Mus musculus (Mouse).